Consider the following 425-residue polypeptide: Na(+)/H(+) antiporter NhaA 1 (425 aa).

Helical transmembrane passes span 20 to 40 (AGGV…NSPL), 65 to 85 (PHLW…GLEI), 102 to 122 (LPFI…LAVT), 131 to 151 (GWAI…ALLG), 160 to 180 (LFLT…IALA), 183 to 203 (ASIK…MMAM), 218 to 238 (FVLL…AGVL), 272 to 292 (FLIV…GFSL), 303 to 323 (IAAG…WAAV), 342 to 362 (LSVL…LAFA), and 373 to 393 (LGVI…LRFA).

This sequence belongs to the NhaA Na(+)/H(+) (TC 2.A.33) antiporter family.

The protein resides in the cell inner membrane. It catalyses the reaction Na(+)(in) + 2 H(+)(out) = Na(+)(out) + 2 H(+)(in). Functionally, na(+)/H(+) antiporter that extrudes sodium in exchange for external protons. This is Na(+)/H(+) antiporter NhaA 1 from Novosphingobium aromaticivorans (strain ATCC 700278 / DSM 12444 / CCUG 56034 / CIP 105152 / NBRC 16084 / F199).